Here is a 391-residue protein sequence, read N- to C-terminus: Sister chromatid cohesion protein DCC1 (391 aa).

It belongs to the DCC1 family. In terms of assembly, component of the ctf18-RFC complex which consists of ctf18, ctf8, dscc1 and the RFC complex.

The protein resides in the nucleus. Loads pcna onto primed templates regulating velocity, spacing and restart activity of replication forks. May couple DNA replication to sister chromatid cohesion. This is Sister chromatid cohesion protein DCC1 (dscc1) from Danio rerio (Zebrafish).